Reading from the N-terminus, the 365-residue chain is 3-dehydroquinate synthase (365 aa).

NAD(+) is bound by residues 107–111 (GVIGD), 131–132 (TS), K144, and K153. Zn(2+) is bound by residues E186, H251, and H268.

It belongs to the sugar phosphate cyclases superfamily. Dehydroquinate synthase family. Co(2+) serves as cofactor. The cofactor is Zn(2+). NAD(+) is required as a cofactor.

It localises to the cytoplasm. It catalyses the reaction 7-phospho-2-dehydro-3-deoxy-D-arabino-heptonate = 3-dehydroquinate + phosphate. It functions in the pathway metabolic intermediate biosynthesis; chorismate biosynthesis; chorismate from D-erythrose 4-phosphate and phosphoenolpyruvate: step 2/7. Catalyzes the conversion of 3-deoxy-D-arabino-heptulosonate 7-phosphate (DAHP) to dehydroquinate (DHQ). This chain is 3-dehydroquinate synthase, found in Crocosphaera subtropica (strain ATCC 51142 / BH68) (Cyanothece sp. (strain ATCC 51142)).